The primary structure comprises 1021 residues: Transmembrane protein 132A (1021 aa).

The first 32 residues, 1 to 32, serve as a signal peptide directing secretion; it reads MTERAAAAPRGPYGAWLCLLVALALEVVRVGS. The Extracellular segment spans residues 33–848; that stretch reads NQNTLDPIYL…VTDLELGMYA (816 aa). The segment at 207–226 is disordered; that stretch reads PAGEGPGGCGPGTEEEPKEQ. N-linked (GlcNAc...) asparagine glycosylation is present at asparagine 276. The tract at residues 606 to 913 is binds to HSPA5/GRP78; the sequence is IEVRSPLSDS…QLDRCSSSSP (308 aa). Residues 666 to 1021 form a confers cellular localization similar to full-length form region; that stretch reads LPAPKQEVAL…NYMERIRGSS (356 aa). Residues 793–835 are disordered; it reads AGDMGSHVGPGIRGKFERAEEEAGKEENEAKEEEEDEEEMVPA. The segment covering 806–820 has biased composition (basic and acidic residues); the sequence is GKFERAEEEAGKEEN. Residues 821-832 show a composition bias toward acidic residues; it reads EAKEEEEDEEEM. Residues 849-869 traverse the membrane as a helical segment; the sequence is LLGIFCLAFLIFLVNGVVFVL. The Cytoplasmic portion of the chain corresponds to 870-1021; it reads RYQRKEPPDS…NYMERIRGSS (152 aa). The interval 903 to 955 is disordered; the sequence is RQLDRCSSSSPPKGEGGCPCESGAGGDTSTVAPSASESPAGSTSTLARKEAGG. The span at 929–948 shows a compositional bias: polar residues; it reads DTSTVAPSASESPAGSTSTL.

It belongs to the TMEM132 family. Interacts with HSPA5/GRP78. Expressed in the brain in neuronal cells of the hypothalamus, thalamus, cerebral cortex, amygdala, and cerebellum.

The protein localises to the golgi apparatus membrane. The protein resides in the endoplasmic reticulum membrane. May play a role in embryonic and postnatal development of the brain. Increased resistance to cell death induced by serum starvation in cultured cells. Regulates cAMP-induced GFAP gene expression via STAT3 phosphorylation. The sequence is that of Transmembrane protein 132A (Tmem132a) from Rattus norvegicus (Rat).